The sequence spans 1025 residues: MAGVLSRDAPDIESILALNPRIQAHATLRSTMAKKLDKKHWKRNTDKNCFICEKLENNFDDIKHTTLGERGALREAVRCLKCADAPCQKSCPTSLDIKSFITSIANKNYYGAAKLIFSDNPLGLTCGMVCPTSDLCVGGCNLHATEEGPINIGGLQQFATEVFKAMNIPQIRSPLLPPPEHMPEAYSAKIALFGAGPASISCASFLARLGYSDITIFEKQEYVGGLSTSEIPQFRLPYDVVNFEIELMKDLGVKIICGKSISTDEMTLSTLKENGYKAAFIGIGLPEPKKDHIFQGLTQVQGFYTSKDFLPLVAKGSKPGMCACHSPLPSVRGAVIVLGAGDTAFDCATSALRCGARRVFIVFRKGFANIRAVPEEMELAKEEKCEFLPFLSPRKVIVKDGKIVGMQFVRTEQDETGNWVEDEEQIVRLKADVVISPFGSVLDDPKVIEALSPIKFNRWGLPEVNPETMQTSEPWVFAGGDVVGMANTTVESVNDGKQASWYIHEYIQAQYGALVPSQPTLPLFYTPVDLVDISVEMAGLRFPNPFGLASATPATSTPMIRRAFEAGWGFALTKTFSLDKDIVTNVSPRIIRGTTSGPLYGPGQSSFLNIELISEKTAAYWCHSVTELKADFPDNILIASIMCSYNKNDWMELSKMAEASGADALELNLSCPHGMGERGMGLACGQDPELVRNICRWVRQSVRVPFFAKLTPNVTDIVSIARAAKEGGADGVTATNTVSGLMGLKADGSPWPSVGSGKRTTYGGVSGTTIRPIALRAVTAIARALPGFPILATGGIDSAESGLQFLHSGASVLQVCSAIQNQDFTVIEDYCTGLKALLYLKSIEELSDWDGQSPPTMSHQKGKPVPHIAELMGQKLPSFGPYLERRKKILAASKIRENDQNRACSPLQRKHFNSQKPIPAIKDVIGKSLQYLGTFGELNIMEQVVALIDEEMCINCGKCYMTCNDSGYQAIQFDPETHLPTVSDTCTGCTLCLSVCPIMDCIRMVSRATPYEPKRGLPLAVKPVC.

The 32-residue stretch at Glu69–Phe100 folds into the 4Fe-4S ferredoxin-type 1 domain. The [4Fe-4S] cluster site is built by Cys79, Cys82, Cys87, and Cys91. Val129 contributes to the FAD binding site. Cys130, Cys136, Cys140, and Gln156 together coordinate [4Fe-4S] cluster. Residues Gly194–Ala198, Glu218–Leu226, and Arg235 each bind FAD. Residues Ala340–Thr343, Arg364–Lys365, and Arg371 contribute to the NADP(+) site. Lys384 carries the post-translational modification N6-acetyllysine. Residues Pro437–Gly439 and Asp481–Asn487 contribute to the NADP(+) site. Position 480–489 (Gly480–Thr489) interacts with FAD. Residues Ser550 and Lys574 to Thr575 each bind FMN. Substrate-binding positions include Asn609 and Asn668 to Ser670. Cys671 (proton acceptor) is an active-site residue. FMN is bound at residue Lys709. Asn736 to Thr737 contributes to the substrate binding site. FMN contacts are provided by residues Gly767, Thr793–Gly795, and Cys816–Ser817. Ser905 carries the phosphoserine modification. 4Fe-4S ferredoxin-type domains follow at residues Val944–Glu976 and His978–Arg1007. 8 residues coordinate [4Fe-4S] cluster: Cys953, Cys956, Cys959, Cys963, Cys986, Cys989, Cys992, and Cys996.

The protein belongs to the dihydropyrimidine dehydrogenase family. Homodimer. It depends on FAD as a cofactor. The cofactor is FMN. Requires [4Fe-4S] cluster as cofactor.

It is found in the cytoplasm. It catalyses the reaction 5,6-dihydrouracil + NADP(+) = uracil + NADPH + H(+). The enzyme catalyses 5,6-dihydrothymine + NADP(+) = thymine + NADPH + H(+). Its pathway is amino-acid biosynthesis; beta-alanine biosynthesis. Inactivated by 5-iodouracil. Involved in pyrimidine base degradation. Catalyzes the reduction of uracil and thymine. Also involved the degradation of the chemotherapeutic drug 5-fluorouracil. The chain is Dihydropyrimidine dehydrogenase [NADP(+)] from Rattus norvegicus (Rat).